A 142-amino-acid polypeptide reads, in one-letter code: HTH-type transcriptional regulator LrpA1 (142 aa).

Residues 1–72 form the HTH asnC-type domain; it reads MSTESTEERI…GQSIAMVGID (72 aa). The H-T-H motif DNA-binding region spans 22 to 41; sequence YAAIAERADVSKPTVRKYID.

In terms of biological role, transcription factor that regulates genes involved in amino acid metabolism. Represses the aspB3 gene, coding for an aspartate transaminase, in the presence of L-aspartate. Another target gene is the basal transcriptional regulator tfbB. Also binds its own promoter. In Halobacterium salinarum (strain ATCC 29341 / DSM 671 / R1), this protein is HTH-type transcriptional regulator LrpA1 (lrpA1).